We begin with the raw amino-acid sequence, 369 residues long: Olfactory receptor 2T1 (369 aa).

At 1-76 (MWQEYYFLNV…LFNRKETSGL (76 aa)) the chain is on the extracellular side. Residue Asn-56 is glycosylated (N-linked (GlcNAc...) asparagine). The chain crosses the membrane as a helical span at residues 77–97 (IFAIISIIFFTALMANGVMIF). The Cytoplasmic segment spans residues 98-107 (LIQTDLRLHT). Residues 108 to 128 (PMYFLLSHLSLIDMMYISTIV) form a helical membrane-spanning segment. At 129-148 (PKMLVNYLLDQRTISFVGCT) the chain is on the extracellular side. Cys-147 and Cys-239 are joined by a disulfide. Residues 149-169 (AQHFLYLTLVGAEFFLLGLMA) form a helical membrane-spanning segment. Topologically, residues 170–191 (YDRYVAICNPLRYPVLMSRRVC) are cytoplasmic. Residues 192 to 212 (WMIIAGSWFGGSLDGFLLTPI) form a helical membrane-spanning segment. At 213 to 247 (TMSFPFCNSREINHFFCEAPAVLKLACADTALYET) the chain is on the extracellular side. Residues 248–268 (VMYVCCVLMLLIPFSVVLASY) form a helical membrane-spanning segment. The Cytoplasmic segment spans residues 269-286 (ARILTTVQCMSSVEGRKK). The chain crosses the membrane as a helical span at residues 287-307 (AFATCSSHMTVVSLFYGAAMY). Residues 308 to 321 (TYMLPHSYHKPAQD) lie on the Extracellular side of the membrane. Residues 322-342 (KVLSVFYTILTPMLNPLIYSL) traverse the membrane as a helical segment. Residues 343–369 (RNKDVTGALKRALGRFKGPQRVSGGVF) lie on the Cytoplasmic side of the membrane.

This sequence belongs to the G-protein coupled receptor 1 family.

The protein localises to the cell membrane. Odorant receptor. In Homo sapiens (Human), this protein is Olfactory receptor 2T1 (OR2T1).